The sequence spans 912 residues: MERAMEQLNRLTRSLRRARTVELPEDNETAVYTLMPMVMADQHRSVLELLSNSKFDVNYAFGRVKRSLLHIAANCGSVECLVLLLKRGADPNYQDISGCTPLHLAARNGQKKCMSKLLEYNADVNICNNEGLTAIHWLAVNGRTELLHDLVQHVTNVDVEDAMGQTALHVACQNGHKTTVLCLLDSGADINRPNVSGATPLYFACSHGQRDTAQILLLRGAKYLPDKNGVTPLDLCVQGGYGETCDILIQHHPRLFQTLIQMTQNEDLRENTLRQVLEHLSQQSEVQYLKILTGLAEVATTNGHKLLSISSSYEAQMKSLLRIVRIFCHVFRIGPSSPNNGNDMGYNGNKTPRNQVFKPLELLWHSLDEWLVLIATELTKNKRDSSNIACILLKQNQLDQQDISLAHQSAIGESGSYDHLSSSTRAEDFESCSAAGKQEPVADGQDVISMTANRLSAVIQAFYMCCSCQMPQGMTSPRFIEFVCKHDDVLKCFVTRNPKIIFDHFHFLLECPELMSRFMHIIKAQPFKERCEWFYEHLLAGQPDSDMVHRPVNENDILLVHRDSIFRSSCEVVFKSNCEKLKQGIAVRFHGEEGMGQGVVREWFDILSSEIINPDYALFTQSADGTTFQPNSNSSVNPDHLNYFRFAGEILGLALYHRQLVNIYFTRSFYKHILGIPVNYQDVASIDPEYAKNLQWILDNDISDLGLELTFSVETDVFGAMEEVPLKPGGASILVTQENKAEYVQLVTELRMTRAIQPQINGFLQGFHMFIPPSLIQLFDEYELELLLSGMPEIDVNDWMKNTEYTSGYERDDQVIQWFWEVVQELTQEERVLLLQFVTGSSRVPHGGFAYIMGGSGLQNFTIAAVAYTPNLLPTSSTCINMLKLPEYPSKEILKDRLLVALHCGSYGYTMA.

ANK repeat units follow at residues 23-55 (LPED…NSKF), 64-93 (VKRS…DPNY), 97-126 (SGCT…DVNI), 130-159 (EGLT…NVDV), 163-192 (MGQT…DINR), 196-226 (SGAT…YLPD), and 228-253 (NGVT…QHHP). Residues 577-912 (NCEKLKQGIA…HCGSYGYTMA (336 aa)) enclose the HECT domain. The Glycyl thioester intermediate role is filled by cysteine 879.

It localises to the golgi apparatus. It is found in the golgi stack membrane. The protein localises to the cytoplasm. The protein resides in the endoplasmic reticulum. The enzyme catalyses S-ubiquitinyl-[E2 ubiquitin-conjugating enzyme]-L-cysteine + [acceptor protein]-L-lysine = [E2 ubiquitin-conjugating enzyme]-L-cysteine + N(6)-ubiquitinyl-[acceptor protein]-L-lysine.. The protein operates within protein modification; protein ubiquitination. Functionally, E3 ubiquitin-protein ligase involved in Golgi membrane fusion and regulation of small GTPases. Acts as a regulator of Golgi membrane dynamics during the cell cycle: recruited to Golgi membrane by Rab proteins and regulates postmitotic Golgi membrane fusion. Acts by mediating ubiquitination during mitotic Golgi disassembly, ubiquitination serving as a signal for Golgi reassembly later, after cell division. This is E3 ubiquitin-protein ligase HACE1 (hace1) from Xenopus tropicalis (Western clawed frog).